The sequence spans 647 residues: Putative ferric-chelate reductase 1 homolog (647 aa).

A helical membrane pass occupies residues 10–30 (WLATLVTALLAVAIWPDPGQS). The Reelin domain maps to 25–195 (PDPGQSLPQG…AAPPLPTQSP (171 aa)). 2 N-linked (GlcNAc...) asparagine glycosylation sites follow: Asn127 and Asn158. One can recognise a DOMON domain in the interval 245–368 (TKSCTSITVV…GKYHLLVASG (124 aa)). The 199-residue stretch at 372 to 570 (KENSVGYHDI…HLIFSIGGMA (199 aa)) folds into the Cytochrome b561 domain. Residues 408-428 (LHGAFMIAAWIGTTSLGIIFA) traverse the membrane as a helical segment. Residues His409 and His450 each coordinate heme b. 5 helical membrane passes run 452–472 (LLMV…WVEL), 480–500 (HSII…GALF), 515–535 (GHWL…FFSV), 548–568 (WILV…SIGG), and 616–636 (LLGV…LLVV). His480 and His516 together coordinate heme b.

Belongs to the FRRS1 family. Heme b is required as a cofactor.

It is found in the membrane. In terms of biological role, putative ferric-chelate reductases reduce Fe(3+) to Fe(2+) before its transport from the endosome to the cytoplasm. This Drosophila melanogaster (Fruit fly) protein is Putative ferric-chelate reductase 1 homolog.